The chain runs to 195 residues: Myelin-associated neurite-outgrowth inhibitor (195 aa).

Methionine 1 bears the N-acetylmethionine mark. Topologically, residues 1–18 are cytoplasmic; it reads MNPVYSPGSSGVPYANAK. Serine 6 carries the phosphoserine modification. The helical transmembrane segment at 19–42 threads the bilayer; that stretch reads GIGYPAGFPMGYAAAAPAYSPNMY. The Extracellular portion of the chain corresponds to 43–142; that stretch reads PGANPTFQAG…PAPLPPPRGN (100 aa). Asparagine 46 is a glycosylation site (N-linked (GlcNAc...) asparagine). The helical transmembrane segment at 143–164 threads the bilayer; it reads GVTMGMVAGTTMAMSAGTLLTA. Topologically, residues 165-195 are cytoplasmic; it reads HSPTPVAPHPVTVPTYRAPGTPTYSYVPPQW.

It belongs to the FAM168 family. In terms of assembly, may form homodimers. May interact with DAZAP2, FAM168A, PRDX6, RBM6, TMTC1 and YPEL2. Interacts with CDC27. In terms of processing, N-glycosylated.

The protein resides in the cytoplasm. The protein localises to the perinuclear region. Its subcellular location is the cell membrane. It localises to the cell projection. It is found in the axon. Its function is as follows. Inhibitor of neuronal axonal outgrowth. Acts as a negative regulator of CDC42 and STAT3 and a positive regulator of STMN2. Positive regulator of CDC27. The chain is Myelin-associated neurite-outgrowth inhibitor (FAM168B) from Bos taurus (Bovine).